The primary structure comprises 582 residues: Aspartate--tRNA(Asp/Asn) ligase (582 aa).

Residue glutamate 177 participates in L-aspartate binding. The aspartate stretch occupies residues 201 to 204 (QLFK). Arginine 223 provides a ligand contact to L-aspartate. ATP contacts are provided by residues 223-225 (RDE) and glutamine 232. Residue histidine 447 coordinates L-aspartate. Glutamate 481 provides a ligand contact to ATP. Residue arginine 488 participates in L-aspartate binding. Residue 533 to 536 (GLDR) coordinates ATP.

It belongs to the class-II aminoacyl-tRNA synthetase family. Type 1 subfamily. Homodimer.

It is found in the cytoplasm. It catalyses the reaction tRNA(Asx) + L-aspartate + ATP = L-aspartyl-tRNA(Asx) + AMP + diphosphate. Functionally, aspartyl-tRNA synthetase with relaxed tRNA specificity since it is able to aspartylate not only its cognate tRNA(Asp) but also tRNA(Asn). Reaction proceeds in two steps: L-aspartate is first activated by ATP to form Asp-AMP and then transferred to the acceptor end of tRNA(Asp/Asn). The chain is Aspartate--tRNA(Asp/Asn) ligase from Chlamydia trachomatis serovar L2 (strain ATCC VR-902B / DSM 19102 / 434/Bu).